The chain runs to 134 residues: RxLR effector protein Avh238 (134 aa).

The first 21 residues, Met1–Ala21, serve as a signal peptide directing secretion. The RxLR-dEER motif lies at Arg44–Arg68. Residues Asp50–Phe72 are disordered. Residues Asp61–Pro70 are compositionally biased toward basic and acidic residues.

Belongs to the RxLR effector family.

Its subcellular location is the secreted. It is found in the host cytoplasm. The protein localises to the host nucleus. In terms of biological role, effector that, due to the lack of a histidine residue at position 79, is not able to induce cell death in tomato, tobacco, eggplant, potato, or in A.thaliana. The chain is RxLR effector protein Avh238 from Phytophthora sojae (Soybean stem and root rot agent).